Reading from the N-terminus, the 131-residue chain is Small ribosomal subunit protein uS8 (131 aa).

This sequence belongs to the universal ribosomal protein uS8 family. As to quaternary structure, part of the 30S ribosomal subunit. Contacts proteins S5 and S12.

One of the primary rRNA binding proteins, it binds directly to 16S rRNA central domain where it helps coordinate assembly of the platform of the 30S subunit. This is Small ribosomal subunit protein uS8 from Ralstonia nicotianae (strain ATCC BAA-1114 / GMI1000) (Ralstonia solanacearum).